The sequence spans 218 residues: Capsid protein (218 aa).

A disordered region spans residues 1–28 (MDKSESTSAGRNRRRRPRRGSRSAPSSA). Over residues 11 to 21 (RNRRRRPRRGS) the composition is skewed to basic residues.

Belongs to the cucumovirus capsid protein family.

It is found in the virion. In terms of biological role, capsid protein. Probably binds RNA and plays a role in packaging. In Cucurbita pepo (Vegetable marrow), this protein is Capsid protein.